Reading from the N-terminus, the 502-residue chain is Aspartyl/glutamyl-tRNA(Asn/Gln) amidotransferase subunit B (502 aa).

Belongs to the GatB/GatE family. GatB subfamily. Heterotrimer of A, B and C subunits.

The catalysed reaction is L-glutamyl-tRNA(Gln) + L-glutamine + ATP + H2O = L-glutaminyl-tRNA(Gln) + L-glutamate + ADP + phosphate + H(+). It catalyses the reaction L-aspartyl-tRNA(Asn) + L-glutamine + ATP + H2O = L-asparaginyl-tRNA(Asn) + L-glutamate + ADP + phosphate + 2 H(+). In terms of biological role, allows the formation of correctly charged Asn-tRNA(Asn) or Gln-tRNA(Gln) through the transamidation of misacylated Asp-tRNA(Asn) or Glu-tRNA(Gln) in organisms which lack either or both of asparaginyl-tRNA or glutaminyl-tRNA synthetases. The reaction takes place in the presence of glutamine and ATP through an activated phospho-Asp-tRNA(Asn) or phospho-Glu-tRNA(Gln). The protein is Aspartyl/glutamyl-tRNA(Asn/Gln) amidotransferase subunit B of Pseudarthrobacter chlorophenolicus (strain ATCC 700700 / DSM 12829 / CIP 107037 / JCM 12360 / KCTC 9906 / NCIMB 13794 / A6) (Arthrobacter chlorophenolicus).